Here is a 406-residue protein sequence, read N- to C-terminus: Cysteine desulfurase (406 aa).

Lys226 is subject to N6-(pyridoxal phosphate)lysine. The Cysteine persulfide intermediate role is filled by Cys364.

The protein belongs to the class-V pyridoxal-phosphate-dependent aminotransferase family. Csd subfamily. As to quaternary structure, homodimer. Interacts with SufE and the SufBCD complex composed of SufB, SufC and SufD. The interaction with SufE is required to mediate the direct transfer of the sulfur atom from the S-sulfanylcysteine. Pyridoxal 5'-phosphate serves as cofactor.

It is found in the cytoplasm. The enzyme catalyses (sulfur carrier)-H + L-cysteine = (sulfur carrier)-SH + L-alanine. It carries out the reaction L-selenocysteine + AH2 = hydrogenselenide + L-alanine + A + H(+). The protein operates within cofactor biosynthesis; iron-sulfur cluster biosynthesis. Cysteine desulfurases mobilize the sulfur from L-cysteine to yield L-alanine, an essential step in sulfur metabolism for biosynthesis of a variety of sulfur-containing biomolecules. Component of the suf operon, which is activated and required under specific conditions such as oxidative stress and iron limitation. Acts as a potent selenocysteine lyase in vitro, that mobilizes selenium from L-selenocysteine. Selenocysteine lyase activity is however unsure in vivo. This chain is Cysteine desulfurase, found in Klebsiella pneumoniae subsp. pneumoniae (strain ATCC 700721 / MGH 78578).